The sequence spans 340 residues: uncharacterized protein (340 aa).

The N-terminal stretch at 1–20 is a signal peptide; it reads MGGARRLKLDGSIPNQLARA.

This is an uncharacterized protein from Mycobacterium tuberculosis (strain CDC 1551 / Oshkosh).